The chain runs to 251 residues: Proteasome subunit alpha type-4-like (251 aa).

The protein belongs to the peptidase T1A family. The 26S proteasome consists of a 20S proteasome core and two 19S regulatory subunits. The 20S proteasome core is composed of 28 subunits that are arranged in four stacked rings, resulting in a barrel-shaped structure. The two end rings are each formed by seven alpha subunits, and the two central rings are each formed by seven beta subunits. The catalytic chamber with the active sites is on the inside of the barrel. Testis, prominent after meiosis II. After meiosis, predominantly localized to the haploid spermatid nuclei of the 64-cell cysts, remaining during the elongation and condensation of the spermatid nuclei. In mature, motile sperm, expression is seen exclusively in the sperm head.

Its subcellular location is the nucleus. Its function is as follows. The proteasome is a multicatalytic proteinase complex which is characterized by its ability to cleave peptides with Arg, Phe, Tyr, Leu, and Glu adjacent to the leaving group at neutral or slightly basic pH. The proteasome has an ATP-dependent proteolytic activity. The protein is Proteasome subunit alpha type-4-like (Prosalpha3T) of Drosophila melanogaster (Fruit fly).